The primary structure comprises 199 residues: Recombination protein RecR (199 aa).

The segment at 58 to 73 (CKKCFNLTSEEECDIC) adopts a C4-type zinc-finger fold. The Toprim domain maps to 81-175 (NIICVVAETK…KVTRIAYGLP (95 aa)).

The protein belongs to the RecR family.

In terms of biological role, may play a role in DNA repair. It seems to be involved in an RecBC-independent recombinational process of DNA repair. It may act with RecF and RecO. This Prochlorococcus marinus (strain MIT 9515) protein is Recombination protein RecR.